Reading from the N-terminus, the 230-residue chain is Acyl-coenzyme A thioesterase THEM4 (230 aa).

The transit peptide at 1-27 (MLRNCAMRLRTLGATPARRPGAARRLF) directs the protein to the mitochondrion. A phosphoserine mark is found at S28 and S29. 2 positions are modified to N6-succinyllysine: K46 and K57. Residue K65 is modified to N6-acetyllysine. 2 positions are modified to N6-succinyllysine: K89 and K98. Catalysis depends on D152, which acts as the Proton donor/acceptor. Substrate contacts are provided by residues K175 and 196–197 (RK). At K197 the chain carries N6-succinyllysine.

The protein belongs to the THEM4/THEM5 thioesterase family. As to quaternary structure, homodimer and homotetramer. Interacts with AKT1 in the cytosol. (Microbial infection) Interacts with V-AKT from AKT8 murine leukemia virus. Post-translationally, phosphorylated.

Its subcellular location is the cell membrane. The protein localises to the cell projection. It is found in the ruffle membrane. It localises to the cytoplasm. The protein resides in the mitochondrion. Its subcellular location is the mitochondrion inner membrane. The protein localises to the mitochondrion intermembrane space. The enzyme catalyses hexadecanoyl-CoA + H2O = hexadecanoate + CoA + H(+). It carries out the reaction octanoyl-CoA + H2O = octanoate + CoA + H(+). It catalyses the reaction decanoyl-CoA + H2O = decanoate + CoA + H(+). The catalysed reaction is dodecanoyl-CoA + H2O = dodecanoate + CoA + H(+). The enzyme catalyses tetradecanoyl-CoA + H2O = tetradecanoate + CoA + H(+). It carries out the reaction (9Z)-octadecenoyl-CoA + H2O = (9Z)-octadecenoate + CoA + H(+). It catalyses the reaction (5Z,8Z,11Z,14Z)-eicosatetraenoyl-CoA + H2O = (5Z,8Z,11Z,14Z)-eicosatetraenoate + CoA + H(+). Its function is as follows. Has acyl-CoA thioesterase activity towards medium and long-chain (C14 to C18) fatty acyl-CoA substrates, and probably plays a role in mitochondrial fatty acid metabolism. Plays a role in the apoptotic process, possibly via its regulation of AKT1 activity. The chain is Acyl-coenzyme A thioesterase THEM4 (Them4) from Mus musculus (Mouse).